Reading from the N-terminus, the 357-residue chain is GDP-polyphosphate phosphotransferase (357 aa).

Positions 1 to 83 (MSEEPTVSPP…DSTSASLPAN (83 aa)) are disordered. The span at 14–25 (QPAAQPAKPARP) shows a compositional bias: low complexity. Positions 26–40 (AARRAPRKPATRRPR) are enriched in basic residues.

It belongs to the polyphosphate kinase 2 (PPK2) family. Class I subfamily. As to quaternary structure, homotetramer. Also forms octamers. Requires Mg(2+) as cofactor. The cofactor is Mn(2+).

The enzyme catalyses [phosphate](n) + GTP = [phosphate](n+1) + GDP. It catalyses the reaction [phosphate](n) + ATP = [phosphate](n+1) + ADP. Functionally, uses inorganic polyphosphate (polyP) as a donor to convert GDP to GTP and ADP to ATP. Shows a preference for GDP. Can also catalyze the synthesis of polyP from GTP or ATP, but the rate of polyP utilization is 75-fold greater than the rate of polyP synthesis. In Pseudomonas aeruginosa (strain ATCC 15692 / DSM 22644 / CIP 104116 / JCM 14847 / LMG 12228 / 1C / PRS 101 / PAO1), this protein is GDP-polyphosphate phosphotransferase.